Here is an 84-residue protein sequence, read N- to C-terminus: MECRPGCGACCTAPSISSPIPGMPDGKPANTPCIQLDEQQRCKIFTSPLRPKVCAGLQASAEMCGNSRQQAMTWLIDLEMLTAP.

Belongs to the UPF0153 family.

This Escherichia coli (strain K12) protein is UPF0153 protein YeiW (yeiW).